Reading from the N-terminus, the 277-residue chain is Shikimate dehydrogenase (NADP(+)) (277 aa).

Shikimate is bound by residues 15–17 (SLS) and threonine 62. Lysine 66 acts as the Proton acceptor in catalysis. The shikimate site is built by asparagine 87 and aspartate 102. Residues 127–131 (GAGGA), 151–156 (NRTVDK), and isoleucine 219 each bind NADP(+). A shikimate-binding site is contributed by tyrosine 221. Glycine 242 lines the NADP(+) pocket.

Belongs to the shikimate dehydrogenase family. In terms of assembly, homodimer.

It catalyses the reaction shikimate + NADP(+) = 3-dehydroshikimate + NADPH + H(+). The protein operates within metabolic intermediate biosynthesis; chorismate biosynthesis; chorismate from D-erythrose 4-phosphate and phosphoenolpyruvate: step 4/7. Functionally, involved in the biosynthesis of the chorismate, which leads to the biosynthesis of aromatic amino acids. Catalyzes the reversible NADPH linked reduction of 3-dehydroshikimate (DHSA) to yield shikimate (SA). This is Shikimate dehydrogenase (NADP(+)) from Bacillus cereus (strain ZK / E33L).